Reading from the N-terminus, the 478-residue chain is Membrane-bound lytic murein transglycosylase F (478 aa).

The first 22 residues, 1-22 (MTRFLFAIILGLLLTACQQETV), serve as a signal peptide directing secretion. Residues 23 to 257 (EETEFVPHKL…HLNEKYFGHV (235 aa)) form a non-LT domain region. The interval 258-478 (KRFDYIDTRA…PGTLSPDKPK (221 aa)) is LT domain. The active site involves Glu302. The segment at 447 to 478 (KQQNSEEVAPSDLTAEETPVPAPGTLSPDKPK) is disordered.

The protein in the N-terminal section; belongs to the bacterial solute-binding protein 3 family. It in the C-terminal section; belongs to the transglycosylase Slt family.

The protein localises to the cell outer membrane. It carries out the reaction Exolytic cleavage of the (1-&gt;4)-beta-glycosidic linkage between N-acetylmuramic acid (MurNAc) and N-acetylglucosamine (GlcNAc) residues in peptidoglycan, from either the reducing or the non-reducing ends of the peptidoglycan chains, with concomitant formation of a 1,6-anhydrobond in the MurNAc residue.. In terms of biological role, murein-degrading enzyme that degrades murein glycan strands and insoluble, high-molecular weight murein sacculi, with the concomitant formation of a 1,6-anhydromuramoyl product. Lytic transglycosylases (LTs) play an integral role in the metabolism of the peptidoglycan (PG) sacculus. Their lytic action creates space within the PG sacculus to allow for its expansion as well as for the insertion of various structures such as secretion systems and flagella. The protein is Membrane-bound lytic murein transglycosylase F of Shewanella oneidensis (strain ATCC 700550 / JCM 31522 / CIP 106686 / LMG 19005 / NCIMB 14063 / MR-1).